Consider the following 194-residue polypeptide: Large ribosomal subunit protein bL25B (194 aa).

Belongs to the bacterial ribosomal protein bL25 family. CTC subfamily. Part of the 50S ribosomal subunit; part of the 5S rRNA/L5/L18/L25 subcomplex. Contacts the 5S rRNA. Binds to the 5S rRNA independently of L5 and L18.

Its function is as follows. This is one of the proteins that binds to the 5S RNA in the ribosome where it forms part of the central protuberance. In Symbiobacterium thermophilum (strain DSM 24528 / JCM 14929 / IAM 14863 / T), this protein is Large ribosomal subunit protein bL25B.